Here is a 149-residue protein sequence, read N- to C-terminus: Nascent polypeptide-associated complex subunit beta-2 (149 aa).

The NAC-A/B domain maps to 38 to 103 (DKDNTKLQAE…PKENTLNGLY (66 aa)).

This sequence belongs to the NAC-beta family. Part of the nascent polypeptide-associated complex (NAC), consisting of EGD2 and either EGD1 or BTT1. NAC associates with ribosomes via EGD1 or BTT1.

It is found in the cytoplasm. The protein resides in the nucleus. Its function is as follows. Acts as a component of the nascent polypeptide-associated complex (NAC), which promotes mitochondrial protein import by enhancing productive ribosome interactions with the outer mitochondrial membrane. Also blocks the inappropriate interaction of ribosomes translating non-secretory nascent polypeptides with translocation sites in the membrane of the endoplasmic reticulum. BTT1 may act as a transcription factor that exert a negative effect on the expression of several genes that are transcribed by RNA polymerase II. In Saccharomyces cerevisiae (strain ATCC 204508 / S288c) (Baker's yeast), this protein is Nascent polypeptide-associated complex subunit beta-2 (BTT1).